Here is a 251-residue protein sequence, read N- to C-terminus: HTH-type transcriptional regulator UlaR (251 aa).

One can recognise an HTH deoR-type domain in the interval 3–58 (EAQRHQILLDMLAQLGFVTVENVIERLGISPATARRDINKLDESGKLKKVRNGAEA). Positions 20–39 (VTVENVIERLGISPATARRD) form a DNA-binding region, H-T-H motif.

The protein resides in the cytoplasm. Represses ulaG and the ulaABCDEF operon. The polypeptide is HTH-type transcriptional regulator UlaR (Salmonella agona (strain SL483)).